The following is a 399-amino-acid chain: Aspartate aminotransferase (399 aa).

L-aspartate-binding residues include Gly42 and Asn179. Residue Lys240 is modified to N6-(pyridoxal phosphate)lysine. An L-aspartate-binding site is contributed by Arg372.

The protein belongs to the class-I pyridoxal-phosphate-dependent aminotransferase family. Homodimer. Pyridoxal 5'-phosphate serves as cofactor.

It localises to the cytoplasm. The enzyme catalyses L-aspartate + 2-oxoglutarate = oxaloacetate + L-glutamate. The protein is Aspartate aminotransferase (aspC) of Sulfurisphaera tokodaii (strain DSM 16993 / JCM 10545 / NBRC 100140 / 7) (Sulfolobus tokodaii).